We begin with the raw amino-acid sequence, 491 residues long: Anthranilate synthase component 1 (491 aa).

Residues S49 and 271–273 (PYL) each bind L-tryptophan. 306-307 (GT) is a binding site for chorismate. E333 serves as a coordination point for Mg(2+). Chorismate contacts are provided by residues Y421, R441, 455 to 457 (GAG), and G457. E470 is a binding site for Mg(2+).

Belongs to the anthranilate synthase component I family. Heterotetramer consisting of two non-identical subunits: a beta subunit (TrpG) and a large alpha subunit (TrpE). The cofactor is Mg(2+).

It catalyses the reaction chorismate + L-glutamine = anthranilate + pyruvate + L-glutamate + H(+). The protein operates within amino-acid biosynthesis; L-tryptophan biosynthesis; L-tryptophan from chorismate: step 1/5. Feedback inhibited by tryptophan. In terms of biological role, part of a heterotetrameric complex that catalyzes the two-step biosynthesis of anthranilate, an intermediate in the biosynthesis of L-tryptophan. In the first step, the glutamine-binding beta subunit (TrpG) of anthranilate synthase (AS) provides the glutamine amidotransferase activity which generates ammonia as a substrate that, along with chorismate, is used in the second step, catalyzed by the large alpha subunit of AS (TrpE) to produce anthranilate. In the absence of TrpG, TrpE can synthesize anthranilate directly from chorismate and high concentrations of ammonia. The protein is Anthranilate synthase component 1 (trpE) of Neisseria gonorrhoeae (strain ATCC 700825 / FA 1090).